The following is a 457-amino-acid chain: Serine--tRNA ligase (457 aa).

252 to 254 contacts L-serine; that stretch reads TAE. ATP contacts are provided by residues 283-285 and Val299; that span reads RKE. Glu306 contributes to the L-serine binding site. Residue 370-373 participates in ATP binding; the sequence is EMVS. Position 406 (Thr406) interacts with L-serine.

This sequence belongs to the class-II aminoacyl-tRNA synthetase family. Type-1 seryl-tRNA synthetase subfamily. In terms of assembly, homodimer. The tRNA molecule binds across the dimer.

It is found in the cytoplasm. It catalyses the reaction tRNA(Ser) + L-serine + ATP = L-seryl-tRNA(Ser) + AMP + diphosphate + H(+). It carries out the reaction tRNA(Sec) + L-serine + ATP = L-seryl-tRNA(Sec) + AMP + diphosphate + H(+). The protein operates within aminoacyl-tRNA biosynthesis; selenocysteinyl-tRNA(Sec) biosynthesis; L-seryl-tRNA(Sec) from L-serine and tRNA(Sec): step 1/1. Catalyzes the attachment of serine to tRNA(Ser). Is also able to aminoacylate tRNA(Sec) with serine, to form the misacylated tRNA L-seryl-tRNA(Sec), which will be further converted into selenocysteinyl-tRNA(Sec). This chain is Serine--tRNA ligase, found in Saccharolobus islandicus (strain Y.N.15.51 / Yellowstone #2) (Sulfolobus islandicus).